The chain runs to 228 residues: L-ribulose-5-phosphate 4-epimerase UlaF (228 aa).

Substrate contacts are provided by residues Gly-26–Asn-27, Ser-43–Gly-44, and Ser-72–Ser-73. Residues Asp-74, His-93, and His-95 each coordinate Zn(2+). The active-site Proton donor/acceptor is the Asp-118. His-167 contributes to the Zn(2+) binding site. Tyr-225 acts as the Proton donor/acceptor in catalysis.

Belongs to the aldolase class II family. AraD/FucA subfamily. Requires Zn(2+) as cofactor.

It catalyses the reaction L-ribulose 5-phosphate = D-xylulose 5-phosphate. It functions in the pathway cofactor degradation; L-ascorbate degradation; D-xylulose 5-phosphate from L-ascorbate: step 4/4. Catalyzes the isomerization of L-ribulose 5-phosphate to D-xylulose 5-phosphate. Is involved in the anaerobic L-ascorbate utilization. The protein is L-ribulose-5-phosphate 4-epimerase UlaF of Shigella boydii serotype 18 (strain CDC 3083-94 / BS512).